A 110-amino-acid chain; its full sequence is Phosphoribosyl-AMP cyclohydrolase (110 aa).

Asp-74 is a Mg(2+) binding site. Position 75 (Cys-75) interacts with Zn(2+). 2 residues coordinate Mg(2+): Asp-76 and Asp-78. Residues Cys-91 and Cys-98 each contribute to the Zn(2+) site.

This sequence belongs to the PRA-CH family. In terms of assembly, homodimer. Mg(2+) serves as cofactor. It depends on Zn(2+) as a cofactor.

The protein resides in the cytoplasm. The catalysed reaction is 1-(5-phospho-beta-D-ribosyl)-5'-AMP + H2O = 1-(5-phospho-beta-D-ribosyl)-5-[(5-phospho-beta-D-ribosylamino)methylideneamino]imidazole-4-carboxamide. Its pathway is amino-acid biosynthesis; L-histidine biosynthesis; L-histidine from 5-phospho-alpha-D-ribose 1-diphosphate: step 3/9. Its function is as follows. Catalyzes the hydrolysis of the adenine ring of phosphoribosyl-AMP. This chain is Phosphoribosyl-AMP cyclohydrolase, found in Lacticaseibacillus casei (strain BL23) (Lactobacillus casei).